Consider the following 508-residue polypeptide: Anthranilate synthase component 1 (508 aa).

L-tryptophan-binding positions include serine 51 and 283–285; that span reads PYM. Chorismate is bound at residue 323–324; the sequence is GT. Glutamate 350 serves as a coordination point for Mg(2+). Chorismate contacts are provided by residues tyrosine 438, arginine 458, 477-479, and glycine 479; that span reads GAG. A Mg(2+)-binding site is contributed by glutamate 492.

The protein belongs to the anthranilate synthase component I family. Heterotetramer consisting of two non-identical subunits: a beta subunit (TrpG) and a large alpha subunit (TrpE). Requires Mg(2+) as cofactor.

The catalysed reaction is chorismate + L-glutamine = anthranilate + pyruvate + L-glutamate + H(+). It participates in amino-acid biosynthesis; L-tryptophan biosynthesis; L-tryptophan from chorismate: step 1/5. Its activity is regulated as follows. Feedback inhibited by tryptophan. In terms of biological role, part of a heterotetrameric complex that catalyzes the two-step biosynthesis of anthranilate, an intermediate in the biosynthesis of L-tryptophan. In the first step, the glutamine-binding beta subunit (TrpG) of anthranilate synthase (AS) provides the glutamine amidotransferase activity which generates ammonia as a substrate that, along with chorismate, is used in the second step, catalyzed by the large alpha subunit of AS (TrpE) to produce anthranilate. In the absence of TrpG, TrpE can synthesize anthranilate directly from chorismate and high concentrations of ammonia. This Synechocystis sp. (strain ATCC 27184 / PCC 6803 / Kazusa) protein is Anthranilate synthase component 1 (trpE).